We begin with the raw amino-acid sequence, 445 residues long: tRNA(Ile)-lysidine synthase (445 aa).

38–43 is a binding site for ATP; the sequence is SGGLDS.

This sequence belongs to the tRNA(Ile)-lysidine synthase family.

It localises to the cytoplasm. It carries out the reaction cytidine(34) in tRNA(Ile2) + L-lysine + ATP = lysidine(34) in tRNA(Ile2) + AMP + diphosphate + H(+). Ligates lysine onto the cytidine present at position 34 of the AUA codon-specific tRNA(Ile) that contains the anticodon CAU, in an ATP-dependent manner. Cytidine is converted to lysidine, thus changing the amino acid specificity of the tRNA from methionine to isoleucine. This is tRNA(Ile)-lysidine synthase from Neisseria gonorrhoeae (strain ATCC 700825 / FA 1090).